The primary structure comprises 387 residues: Transcription termination/antitermination protein NusA (387 aa).

The region spanning 145–209 (GQVLTGVVTR…AKGPSLLVSR (65 aa)) is the S1 motif domain. The 68-residue stretch at 312 to 379 (AKKARVKVTK…ARERKAREEF (68 aa)) folds into the KH domain.

It belongs to the NusA family. Monomer. Binds directly to the core enzyme of the DNA-dependent RNA polymerase and to nascent RNA.

The protein resides in the cytoplasm. Its function is as follows. Participates in both transcription termination and antitermination. The polypeptide is Transcription termination/antitermination protein NusA (Thermus thermophilus (strain ATCC 27634 / DSM 579 / HB8)).